A 480-amino-acid polypeptide reads, in one-letter code: Glutamate--tRNA ligase (480 aa).

Residues 21-31 (PSPTGYLHVGG) carry the 'HIGH' region motif. Residues Cys-110, Cys-112, Cys-137, and His-139 each coordinate Zn(2+). Residues 248–252 (KLSKR) carry the 'KMSKS' region motif. An ATP-binding site is contributed by Lys-251.

The protein belongs to the class-I aminoacyl-tRNA synthetase family. Glutamate--tRNA ligase type 1 subfamily. In terms of assembly, monomer. Zn(2+) serves as cofactor.

The protein resides in the cytoplasm. It catalyses the reaction tRNA(Glu) + L-glutamate + ATP = L-glutamyl-tRNA(Glu) + AMP + diphosphate. Catalyzes the attachment of glutamate to tRNA(Glu) in a two-step reaction: glutamate is first activated by ATP to form Glu-AMP and then transferred to the acceptor end of tRNA(Glu). The sequence is that of Glutamate--tRNA ligase from Actinobacillus succinogenes (strain ATCC 55618 / DSM 22257 / CCUG 43843 / 130Z).